The primary structure comprises 485 residues: Otoconin-90 (485 aa).

Positions methionine 1 to alanine 17 are cleaved as a signal peptide. N-linked (GlcNAc...) asparagine glycosylation occurs at asparagine 37. The tract at residues leucine 75–cysteine 189 is phospholipase A2-like 1. 7 disulfides stabilise this stretch: cysteine 84–cysteine 144, cysteine 98–cysteine 189, cysteine 100–cysteine 116, cysteine 115–cysteine 171, cysteine 122–cysteine 164, cysteine 131–cysteine 157, and cysteine 151–cysteine 162. N-linked (GlcNAc...) asparagine glycosylation is found at asparagine 178 and asparagine 288. Phospholipase A2-like stretches follow at residues methionine 315–cysteine 371 and cysteine 383–cysteine 435. Asparagine 417 carries N-linked (GlcNAc...) asparagine glycosylation. A disordered region spans residues leucine 444–lysine 485.

The protein belongs to the phospholipase A2 family. As to quaternary structure, interacts with OTOL1. In the embryo, highly expressed in the developing otocyst with weak expression in the brain. Also expressed in nonsensory epithelia of both the vestibular and cochlear portions of the developing inner ear. Not expressed in adult or embryonic macular sensory epithelia.

Its subcellular location is the secreted. Functionally, major protein of the otoconia, a calcium carbonate structure in the saccule and utricle of the ear. Together with OTOL1, acts as a scaffold for otoconia biomineralization: sequesters calcium and forms interconnecting fibrils between otoconia that are incorporated into the calcium crystal structure. Together with OTOL1, modulates calcite crystal morphology and growth kinetics. It is unlikely that this protein has phospholipase A2 activity. The sequence is that of Otoconin-90 from Mus musculus (Mouse).